The following is a 580-amino-acid chain: uncharacterized protein (580 aa).

One can recognise a PE-PPE domain in the interval 300–525 (PGYTATFLET…LRVLVELGYD (226 aa)).

Belongs to the mycobacterial PPE family.

This is an uncharacterized protein from Mycobacterium tuberculosis (strain CDC 1551 / Oshkosh).